Here is a 443-residue protein sequence, read N- to C-terminus: Chromosomal replication initiator protein DnaA (443 aa).

Residues 1–80 are domain I, interacts with DnaA modulators; sequence MTSQFASLWQ…LGESVEVRFF (80 aa). The tract at residues 80–104 is domain II; it reads FTPSADSRRSEPSRRPVATEESSPP. The segment at 83-105 is disordered; sequence SADSRRSEPSRRPVATEESSPPL. Residues 85-97 show a composition bias toward basic and acidic residues; that stretch reads DSRRSEPSRRPVA. Residues 105–321 are domain III, AAA+ region; the sequence is LLNPKYTFDT…GALNRVIAYA (217 aa). ATP-binding residues include Gly149, Gly151, Lys152, and Thr153. Residues 322–443 are domain IV, binds dsDNA; it reads NLSGKSLTSE…QVLKEKIQRA (122 aa).

The protein belongs to the DnaA family. In terms of assembly, oligomerizes as a right-handed, spiral filament on DNA at oriC.

It localises to the cytoplasm. In terms of biological role, plays an essential role in the initiation and regulation of chromosomal replication. ATP-DnaA binds to the origin of replication (oriC) to initiate formation of the DNA replication initiation complex once per cell cycle. Binds the DnaA box (a 9 base pair repeat at the origin) and separates the double-stranded (ds)DNA. Forms a right-handed helical filament on oriC DNA; dsDNA binds to the exterior of the filament while single-stranded (ss)DNA is stabiized in the filament's interior. The ATP-DnaA-oriC complex binds and stabilizes one strand of the AT-rich DNA unwinding element (DUE), permitting loading of DNA polymerase. After initiation quickly degrades to an ADP-DnaA complex that is not apt for DNA replication. Binds acidic phospholipids. The chain is Chromosomal replication initiator protein DnaA from Heliobacterium modesticaldum (strain ATCC 51547 / Ice1).